Reading from the N-terminus, the 407-residue chain is CCA-adding enzyme (407 aa).

Residues G32 and R35 each coordinate ATP. CTP contacts are provided by G32 and R35. Residues D45 and D47 each coordinate Mg(2+). 5 residues coordinate ATP: R116, D159, R162, R165, and R168. 5 residues coordinate CTP: R116, D159, R162, R165, and R168.

Belongs to the tRNA nucleotidyltransferase/poly(A) polymerase family. Bacterial CCA-adding enzyme type 3 subfamily. As to quaternary structure, homodimer. It depends on Mg(2+) as a cofactor.

The catalysed reaction is a tRNA precursor + 2 CTP + ATP = a tRNA with a 3' CCA end + 3 diphosphate. The enzyme catalyses a tRNA with a 3' CCA end + 2 CTP + ATP = a tRNA with a 3' CCACCA end + 3 diphosphate. Functionally, catalyzes the addition and repair of the essential 3'-terminal CCA sequence in tRNAs without using a nucleic acid template. Adds these three nucleotides in the order of C, C, and A to the tRNA nucleotide-73, using CTP and ATP as substrates and producing inorganic pyrophosphate. tRNA 3'-terminal CCA addition is required both for tRNA processing and repair. Also involved in tRNA surveillance by mediating tandem CCA addition to generate a CCACCA at the 3' terminus of unstable tRNAs. While stable tRNAs receive only 3'-terminal CCA, unstable tRNAs are marked with CCACCA and rapidly degraded. This chain is CCA-adding enzyme, found in Lactiplantibacillus plantarum (strain ATCC BAA-793 / NCIMB 8826 / WCFS1) (Lactobacillus plantarum).